The sequence spans 149 residues: Large ribosomal subunit protein uL15 (149 aa).

Positions 1-52 (MSELLKLHHLRPAPGSNKAKIRKGRGEASKGKTAGRGTKGTKARSTVPAGFE) are disordered.

It belongs to the universal ribosomal protein uL15 family. As to quaternary structure, part of the 50S ribosomal subunit.

In terms of biological role, binds to the 23S rRNA. The sequence is that of Large ribosomal subunit protein uL15 from Thermobifida fusca (strain YX).